The primary structure comprises 1402 residues: Erbin (1402 aa).

LRR repeat units lie at residues 23-44 (TVTT…IFTF), 47-68 (TLEE…LFNC), 70-91 (SLHK…IANL), 93-114 (NLRE…IKNC), 116-137 (VLTI…FSQL), 139-161 (NLTQ…GRLT), 162-183 (KLQI…MNRL), 185-206 (QLER…LEQL), 208-229 (GLRE…IGSL), 231-252 (QLTY…ISTC), 254-275 (NLQD…IGSL), 277-298 (NVTT…IGGL), 300-321 (SIEE…IGQL), 323-344 (NMRT…IGNW), 346-367 (NITV…MGDM), 369-391 (KLKV…TKLQ), and 392-413 (QLTA…QKET). Residues S440 and S444 each carry the phosphoserine modification. 2 disordered regions span residues 465–489 (DEDK…PYPD) and 507–543 (DEET…TTKS). Positions 470-480 (EREAPPREGNL) are enriched in basic and acidic residues. Residue Y483 is modified to Phosphotyrosine. The residue at position 485 (T485) is a Phosphothreonine. Residues 507-534 (DEETNEESGRDLKQHEDQQVVNKDKCVK) are compositionally biased toward basic and acidic residues. 4 positions are modified to phosphoserine: S595, S599, S600, and S617. Residues 629 to 638 (NKKDDAKDAD) are compositionally biased toward basic and acidic residues. Residues 629–694 (NKKDDAKDAD…PVDSNSKVRQ (66 aa)) are disordered. Residues 647–659 (NSNQNNSNCSSPS) are compositionally biased toward low complexity. The span at 660-689 (RMSDSVSLNTDSSQDTSLCSPVKQTPVDSN) shows a compositional bias: polar residues. A phosphoserine mark is found at S712, S849, S854, and S869. The segment at 824–864 (EDTAPSPGRVEPQKASSSADVGISKSTEDLSPQRSGPTGAV) is disordered. T914 bears the Phosphothreonine mark. Y917 is modified (phosphotyrosine). S928 is subject to Phosphoserine. Y970 carries the post-translational modification Phosphotyrosine. Disordered stretches follow at residues 990 to 1018 (WHPK…ENHS) and 1070 to 1093 (TTIQ…TRRT). Polar residues predominate over residues 1070 to 1084 (TTIQRQSSVSSTASV). A Phosphotyrosine modification is found at Y1097. Disordered regions lie at residues 1107–1187 (GRTP…VPHD), 1198–1217 (AKKL…CQDD), and 1222–1274 (EEQN…VARH). Polar residues-rich tracts occupy residues 1128–1139 (GPNTSRPQSARP) and 1149–1164 (MSVS…PSKR). Phosphoserine is present on residues S1150 and S1171. Phosphoserine occurs at positions 1231, 1234, and 1276. A PDZ domain is found at 1311–1400 (EIRVRVEKDP…AVDLIIVREV (90 aa)).

The protein belongs to the LAP (LRR and PDZ) protein family. As to quaternary structure, interacts with ERBB2, BPAG1 and ITGB4. May favor the localization of ERBB2, by restricting its presence to the basolateral membrane of epithelial cells. Also found to interact with ARVCF and delta catenin. Interacts (via C-terminus) with DST (via N-terminus). Interacts with NOD2 (via CARD domain). Isoform 2 is phosphorylated on Ser-1231 and Ser-1234.

It is found in the cell junction. The protein resides in the hemidesmosome. Its subcellular location is the nucleus membrane. It localises to the basolateral cell membrane. Its function is as follows. Acts as an adapter for the receptor ERBB2, in epithelia. By binding the unphosphorylated ERBB2 'Tyr-1248' receptor, it may contribute to stabilize this unphosphorylated state. Inhibits NOD2-dependent NF-kappa-B signaling and pro-inflammatory cytokine secretion. The chain is Erbin from Mus musculus (Mouse).